The chain runs to 556 residues: Oxygen-dependent choline dehydrogenase (556 aa).

4–33 contributes to the FAD binding site; it reads DYIIIGAGSAGNVLATRLTEDPNTTVLLLE. His-473 (proton acceptor) is an active-site residue.

It belongs to the GMC oxidoreductase family. Requires FAD as cofactor.

It carries out the reaction choline + A = betaine aldehyde + AH2. The catalysed reaction is betaine aldehyde + NAD(+) + H2O = glycine betaine + NADH + 2 H(+). Its pathway is amine and polyamine biosynthesis; betaine biosynthesis via choline pathway; betaine aldehyde from choline (cytochrome c reductase route): step 1/1. In terms of biological role, involved in the biosynthesis of the osmoprotectant glycine betaine. Catalyzes the oxidation of choline to betaine aldehyde and betaine aldehyde to glycine betaine at the same rate. The polypeptide is Oxygen-dependent choline dehydrogenase (Escherichia coli O127:H6 (strain E2348/69 / EPEC)).